Reading from the N-terminus, the 346-residue chain is Elongation factor Ts (346 aa).

Residues 80-83 (TDFV) are involved in Mg(2+) ion dislocation from EF-Tu.

This sequence belongs to the EF-Ts family.

Its subcellular location is the cytoplasm. In terms of biological role, associates with the EF-Tu.GDP complex and induces the exchange of GDP to GTP. It remains bound to the aminoacyl-tRNA.EF-Tu.GTP complex up to the GTP hydrolysis stage on the ribosome. The sequence is that of Elongation factor Ts from Streptococcus pneumoniae serotype 19F (strain G54).